A 469-amino-acid polypeptide reads, in one-letter code: Probable periplasmic serine endoprotease DegP-like (469 aa).

An N-terminal signal peptide occupies residues 1-25 (MKVCQKYTAVLLVWLSAVVSMRAGA). Residues histidine 108, aspartate 138, and serine 211 each act as charge relay system in the active site. Substrate is bound by residues 209 to 211 (GNS) and 266 to 270 (LGVLI). PDZ domains are found at residues 255–346 (LKDT…VRRG) and 352–457 (AVEI…IRQG).

This sequence belongs to the peptidase S1C family.

It is found in the periplasm. It carries out the reaction Acts on substrates that are at least partially unfolded. The cleavage site P1 residue is normally between a pair of hydrophobic residues, such as Val-|-Val.. Its function is as follows. Might be efficient in the degradation of transiently denatured and unfolded proteins which accumulate in the periplasm following stress conditions. This Hahella chejuensis (strain KCTC 2396) protein is Probable periplasmic serine endoprotease DegP-like (mucD).